Consider the following 256-residue polypeptide: Thiazole synthase (256 aa).

Lysine 95 serves as the catalytic Schiff-base intermediate with DXP. Residues glycine 156, 182–183 (AG), and 204–205 (NT) contribute to the 1-deoxy-D-xylulose 5-phosphate site.

The protein belongs to the ThiG family. Homotetramer. Forms heterodimers with either ThiH or ThiS.

The protein localises to the cytoplasm. The catalysed reaction is [ThiS sulfur-carrier protein]-C-terminal-Gly-aminoethanethioate + 2-iminoacetate + 1-deoxy-D-xylulose 5-phosphate = [ThiS sulfur-carrier protein]-C-terminal Gly-Gly + 2-[(2R,5Z)-2-carboxy-4-methylthiazol-5(2H)-ylidene]ethyl phosphate + 2 H2O + H(+). The protein operates within cofactor biosynthesis; thiamine diphosphate biosynthesis. In terms of biological role, catalyzes the rearrangement of 1-deoxy-D-xylulose 5-phosphate (DXP) to produce the thiazole phosphate moiety of thiamine. Sulfur is provided by the thiocarboxylate moiety of the carrier protein ThiS. In vitro, sulfur can be provided by H(2)S. This is Thiazole synthase from Idiomarina loihiensis (strain ATCC BAA-735 / DSM 15497 / L2-TR).